Consider the following 435-residue polypeptide: Xylose isomerase (435 aa).

Residues His99 and Asp102 contribute to the active site. 7 residues coordinate Mg(2+): Glu230, Glu266, His269, Asp294, Asp305, Asp307, and Asp337.

This sequence belongs to the xylose isomerase family. As to quaternary structure, homotetramer. The cofactor is Mg(2+).

The protein localises to the cytoplasm. The catalysed reaction is alpha-D-xylose = alpha-D-xylulofuranose. This is Xylose isomerase from Enterococcus faecalis (strain ATCC 700802 / V583).